An 88-amino-acid chain; its full sequence is Phosphocarrier protein HPr (88 aa).

The HPr domain occupies 1-88; the sequence is MEQQSYTIID…DVLSKEGLTE (88 aa). Histidine 15 (pros-phosphohistidine intermediate) is an active-site residue. At serine 46 the chain carries Phosphoserine; by HPrK/P.

Belongs to the HPr family.

It is found in the cytoplasm. Its activity is regulated as follows. Phosphorylation on Ser-46 inhibits the phosphoryl transfer from enzyme I to HPr. Its function is as follows. General (non sugar-specific) component of the phosphoenolpyruvate-dependent sugar phosphotransferase system (sugar PTS). This major carbohydrate active-transport system catalyzes the phosphorylation of incoming sugar substrates concomitantly with their translocation across the cell membrane. The phosphoryl group from phosphoenolpyruvate (PEP) is transferred to the phosphoryl carrier protein HPr by enzyme I. Phospho-HPr then transfers it to the PTS EIIA domain. Functionally, P-Ser-HPr interacts with the catabolite control protein A (CcpA), forming a complex that binds to DNA at the catabolite response elements cre, operator sites preceding a large number of catabolite-regulated genes. Thus, P-Ser-HPr is a corepressor in carbon catabolite repression (CCR), a mechanism that allows bacteria to coordinate and optimize the utilization of available carbon sources. P-Ser-HPr also plays a role in inducer exclusion, in which it probably interacts with several non-PTS permeases and inhibits their transport activity. The sequence is that of Phosphocarrier protein HPr (ptsH) from Staphylococcus carnosus.